We begin with the raw amino-acid sequence, 605 residues long: DNA primase (605 aa).

The CHC2-type zinc finger occupies 38-62 (CPFHDEKTPSFTVSEDKQICHCFGC). The region spanning 260-341 (DEIVLLEGFM…NVFVIQLPSG (82 aa)) is the Toprim domain. The Mg(2+) site is built by Glu-266, Asp-310, and Asp-312.

Belongs to the DnaG primase family. In terms of assembly, monomer. Interacts with DnaB. The cofactor is Zn(2+). It depends on Mg(2+) as a cofactor.

The catalysed reaction is ssDNA + n NTP = ssDNA/pppN(pN)n-1 hybrid + (n-1) diphosphate.. In terms of biological role, RNA polymerase that catalyzes the synthesis of short RNA molecules used as primers for DNA polymerase during DNA replication. The protein is DNA primase of Staphylococcus aureus (strain MSSA476).